A 427-amino-acid polypeptide reads, in one-letter code: Phosphatase PSR1 (427 aa).

2 S-palmitoyl cysteine lipidation sites follow: Cys9 and Cys10. Polar residues predominate over residues 14–34 (TTQSNSNSAYRQQQSSSLNKN). The tract at residues 14 to 223 (TTQSNSNSAY…SNDADDEDDE (210 aa)) is disordered. A compositionally biased stretch (basic residues) spans 35–48 (RSVKHSNTKSRTRG). Residues 49-80 (VHQTNSPPSKTNSAATFSSTERSTGKSGISTN) are compositionally biased toward polar residues. Positions 104 to 118 (KVEKRISKDDLYEEK) are enriched in basic and acidic residues. Phosphoserine is present on Ser110. Over residues 119 to 130 (YEVDEDEEIDDE) the composition is skewed to acidic residues. Basic and acidic residues predominate over residues 131–151 (DNRRSRGIVQEKGDAVKDTSR). Residue Lys154 forms a Glycyl lysine isopeptide (Lys-Gly) (interchain with G-Cter in ubiquitin) linkage. Over residues 155-183 (QQQQQQQQSQPQPQPQSQSQSQSQSQSQQ) the composition is skewed to low complexity. The segment covering 184–214 (RGPTVQVSSDHLIQDMNLSRVSSSSQASETS) has biased composition (polar residues). The FCP1 homology domain maps to 253–411 (STKGKKCLIL…LDIIPLLEDL (159 aa)).

As to quaternary structure, interacts with WHI2.

It localises to the cell membrane. Functionally, has phosphatase activity in vitro. Involved in the response to sodium and lithium ion stress (but not to potassium or sorbitol stress) by inducing transcription of the sodium pump ENA1/PMR2. Acts through a calcineurin-independent pathway and is functionally redundant with PSR2. Also involved in the general stress response; acts together with WHI2 to activate stress response element (STRE)-mediated gene expression, possibly through dephosphorylation of MSN2. This chain is Phosphatase PSR1 (PSR1), found in Saccharomyces cerevisiae (strain ATCC 204508 / S288c) (Baker's yeast).